A 150-amino-acid polypeptide reads, in one-letter code: Endoribonuclease YbeY (150 aa).

3 residues coordinate Zn(2+): His-113, His-117, and His-123.

This sequence belongs to the endoribonuclease YbeY family. It depends on Zn(2+) as a cofactor.

The protein localises to the cytoplasm. Single strand-specific metallo-endoribonuclease involved in late-stage 70S ribosome quality control and in maturation of the 3' terminus of the 16S rRNA. This is Endoribonuclease YbeY from Syntrophotalea carbinolica (strain DSM 2380 / NBRC 103641 / GraBd1) (Pelobacter carbinolicus).